The primary structure comprises 174 residues: Protein-lysine myristoyltransferase HlyC (174 aa).

Active-site residues include histidine 23 and aspartate 92. Histidine 151 is a binding site for heme.

Belongs to the RTX toxin acyltransferase family. In terms of assembly, monomer. Proteolytically cleaved by the protease systems ClpAP, ClpXP and FtsH, leading to its degradation.

Its subcellular location is the cytoplasm. It carries out the reaction tetradecanoyl-[ACP] + L-lysyl-[protein] = N(6)-tetradecanoyl-L-lysyl-[protein] + holo-[ACP] + H(+). With respect to regulation, the acyltransferase activity is inhibited by heme. Functionally, protein-lysine myristoyltransferase that catalyzes myristoylation of the protoxin (HlyA) at two internal lysine residues, thereby converting it to the active toxin. The sequence is that of Protein-lysine myristoyltransferase HlyC from Escherichia coli.